A 147-amino-acid polypeptide reads, in one-letter code: uncharacterized protein (147 aa).

Helical transmembrane passes span 21-41 and 67-87; these read LMLW…IVFV and ALFG…SIPL.

The protein resides in the cell membrane. This is an uncharacterized protein from Ureaplasma parvum serovar 3 (strain ATCC 700970).